The chain runs to 730 residues: Propionyl-CoA carboxylase alpha chain, mitochondrial (730 aa).

The N-terminal 52 residues, 1–52 (MAGLWVGGSVLVAAGRRGSRSPRPLMRSVALWTLKHVPQYSRQRLLVSRSLC), are a transit peptide targeting the mitochondrion. Positions 62–509 (TFDKILIANR…NTKFLSDVYP (448 aa)) constitute a Biotin carboxylation domain. K65 carries the N6-acetyllysine; alternate modification. N6-succinyllysine; alternate is present on K65. K119 bears the N6-succinyllysine mark. Position 150 is an N6-acetyllysine; alternate (K150). An N6-succinyllysine; alternate modification is found at K150. K154 carries the post-translational modification N6-acetyllysine. K177 provides a ligand contact to ATP. The region spanning 181-378 (KLLAKKAKVN…LVQEMIRVAK (198 aa)) is the ATP-grasp domain. An N6-succinyllysine modification is found at K188. Position 200 is an N6-acetyllysine; alternate (K200). K200 bears the N6-succinyllysine; alternate mark. Residues 209–270 (AREI…PRHI), E261, and N296 each bind ATP. S252 bears the Phosphoserine mark. Position 262 is an N6-succinyllysine (K262). Mg(2+) is bound by residues E336, E349, and N351. Residues E336, E349, and N351 each coordinate Mn(2+). The active site involves E349. N6-succinyllysine is present on K407. F409 is a binding site for biotin. K502, K513, and K650 each carry N6-succinyllysine. One can recognise a Biotinyl-binding domain in the interval 655–730 (KAAEDTSSIL…GEGDLLVELE (76 aa)). An N6-biotinyllysine modification is found at K696.

The holoenzyme is a dodecamer composed of 6 PCCA/alpha subunits and 6 PCCB/beta subunits. Interacts (via the biotin carboxylation domain) with SIRT4. Interacts with SIRT3 and SIRT5. Mg(2+) serves as cofactor. Requires Mn(2+) as cofactor. The cofactor is biotin. Acetylated. In terms of processing, the biotin cofactor is covalently attached to the C-terminal biotinyl-binding domain and is required for the catalytic activity. Biotinylation is catalyzed by HLCS.

It is found in the mitochondrion matrix. The catalysed reaction is propanoyl-CoA + hydrogencarbonate + ATP = (S)-methylmalonyl-CoA + ADP + phosphate + H(+). The enzyme catalyses butanoyl-CoA + hydrogencarbonate + ATP = (2S)-ethylmalonyl-CoA + ADP + phosphate + H(+). The protein operates within metabolic intermediate metabolism; propanoyl-CoA degradation; succinyl-CoA from propanoyl-CoA: step 1/3. Functionally, this is one of the 2 subunits of the biotin-dependent propionyl-CoA carboxylase (PCC), a mitochondrial enzyme involved in the catabolism of odd chain fatty acids, branched-chain amino acids isoleucine, threonine, methionine, and valine and other metabolites. Propionyl-CoA carboxylase catalyzes the carboxylation of propionyl-CoA/propanoyl-CoA to D-methylmalonyl-CoA/(S)-methylmalonyl-CoA. Within the holoenzyme, the alpha subunit catalyzes the ATP-dependent carboxylation of the biotin carried by the biotin carboxyl carrier (BCC) domain, while the beta subunit then tranfers the carboxyl group from carboxylated biotin to propionyl-CoA. Propionyl-CoA carboxylase also significantly acts on butyryl-CoA/butanoyl-CoA, which is converted to ethylmalonyl-CoA/(2S)-ethylmalonyl-CoA at a much lower rate. Other alternative minor substrates include (2E)-butenoyl-CoA/crotonoyl-CoA. The chain is Propionyl-CoA carboxylase alpha chain, mitochondrial from Sus scrofa (Pig).